Here is a 210-residue protein sequence, read N- to C-terminus: Uracil phosphoribosyltransferase (210 aa).

5-phospho-alpha-D-ribose 1-diphosphate contacts are provided by residues R78, R103, and 130-138 (DPMLATGGT). Uracil is bound by residues I193 and 198 to 200 (GDA). D199 contributes to the 5-phospho-alpha-D-ribose 1-diphosphate binding site.

This sequence belongs to the UPRTase family. It depends on Mg(2+) as a cofactor.

It carries out the reaction UMP + diphosphate = 5-phospho-alpha-D-ribose 1-diphosphate + uracil. It participates in pyrimidine metabolism; UMP biosynthesis via salvage pathway; UMP from uracil: step 1/1. With respect to regulation, allosterically activated by GTP. In terms of biological role, catalyzes the conversion of uracil and 5-phospho-alpha-D-ribose 1-diphosphate (PRPP) to UMP and diphosphate. This chain is Uracil phosphoribosyltransferase, found in Xanthomonas campestris pv. campestris (strain 8004).